Here is a 415-residue protein sequence, read N- to C-terminus: Tyrosine--tRNA ligase (415 aa).

The 'HIGH' region motif lies at 54–63 (PTGSNIHLGH). The 'KMSKS' region motif lies at 248-252 (KMSKS). Lys-251 serves as a coordination point for ATP. The S4 RNA-binding domain occupies 351–415 (AKAFYLLSAV…GKKTFRRLTA (65 aa)).

This sequence belongs to the class-I aminoacyl-tRNA synthetase family. TyrS type 2 subfamily. As to quaternary structure, homodimer.

Its subcellular location is the cytoplasm. It catalyses the reaction tRNA(Tyr) + L-tyrosine + ATP = L-tyrosyl-tRNA(Tyr) + AMP + diphosphate + H(+). In terms of biological role, catalyzes the attachment of tyrosine to tRNA(Tyr) in a two-step reaction: tyrosine is first activated by ATP to form Tyr-AMP and then transferred to the acceptor end of tRNA(Tyr). The sequence is that of Tyrosine--tRNA ligase from Parasynechococcus marenigrum (strain WH8102).